The chain runs to 389 residues: P2X purinoceptor 6 (389 aa).

The Cytoplasmic segment spans residues 1 to 45; sequence MQLQPAGTGNMASAAAAALVSWGFLDYKTEKYVLTRNCRVGVSQR. Residues 46 to 66 form a helical membrane-spanning segment; sequence LLQLAVVVYVIGWALLAKKGY. The Extracellular segment spans residues 67 to 335; the sequence is QERDLAPQTS…LVTGQAGKFA (269 aa). Intrachain disulfides connect cysteine 129-cysteine 179, cysteine 140-cysteine 163, and cysteine 146-cysteine 173. Asparagine 167, asparagine 197, and asparagine 212 each carry an N-linked (GlcNAc...) asparagine glycan. 2 disulfide bridges follow: cysteine 230–cysteine 240 and cysteine 274–cysteine 283. Residues 336 to 356 form a helical membrane-spanning segment; sequence LIPTAITVGTGAAWLGMVTFL. Topologically, residues 357–389 are cytoplasmic; sequence CDLLLLYVDREAGFYWRTKYEEARAPKTTTNSS.

This sequence belongs to the P2X receptor family. As to quaternary structure, unlike most P2RXs, P2RX6 does not seem to form homotrimers. P2RX6 are likely to form as obligate heteromers with other P2RXs subunits. Forms heterotrimer with P2RX2 with a variable subunit stoichiometry determined by subunit expression levels. Forms heterotrimer with P2RX4; functional differences between homomeric P2RX4 and P2RX4/6 heterotrimer are minor. Forms a P2RX2/P2RX4/P2RX6 heterotrimer. Interacts with SF3A1; resulting in a reduction of the splicing activity. Post-translationally, N-glycosylated. N-linked glycosylation can affect trafficking to the membrane and function. In terms of tissue distribution, predominantly expressed in skeletal muscle. Also expressed in lung.

It localises to the cell membrane. The protein resides in the endoplasmic reticulum. Its subcellular location is the nucleus. The protein localises to the nucleus inner membrane. It catalyses the reaction Ca(2+)(in) = Ca(2+)(out). In terms of biological role, acts as a modulatory subunit rather than a functional channel. Unlike other P2XRs members, P2RX6 does not seem to form functional homotrimers. P2RX6 requires the presence of P2RX4 or P2RX2 to form functional heterotrimeric receptors at the plasma membrane. P2RX6 can be translocated to the nucleus, where it interacts with the splicing factor (SF3A1), to reduce the incidence of mRNA splicing. May function as a nuclear regulator of post-transcriptional modifications in neurons. This Mus musculus (Mouse) protein is P2X purinoceptor 6 (P2rx6).